The chain runs to 511 residues: uncharacterized protein (511 aa).

Residues 2-254 (LMDYEKERTE…NFQEKAPIHE (253 aa)) enclose the CoA carboxyltransferase N-terminal domain. Residues 2 to 506 (LMDYEKERTE…KEMTFTNRKH (505 aa)) are carboxyltransferase. In terms of domain architecture, CoA carboxyltransferase C-terminal spans 260–506 (HFETPLADVI…KEMTFTNRKH (247 aa)).

It belongs to the AccD/PCCB family.

This is an uncharacterized protein from Bacillus subtilis (strain 168).